The primary structure comprises 210 residues: Protein SgcE (210 aa).

Ser-6 serves as a coordination point for substrate. Residues His-31, Asp-33, and His-64 each contribute to the a divalent metal cation site. Asp-33 acts as the Proton acceptor in catalysis. Substrate is bound by residues His-64, 140 to 143, 169 to 171, and 191 to 192; these read DGQG, DGG, and GR. Residue Asp-169 participates in a divalent metal cation binding. Asp-169 acts as the Proton donor in catalysis.

It belongs to the ribulose-phosphate 3-epimerase family. Requires Co(2+) as cofactor. It depends on Fe(2+) as a cofactor. Mn(2+) is required as a cofactor. The cofactor is Zn(2+).

The protein operates within carbohydrate degradation. Probable pentose-5-phosphate 3-epimerase. In Escherichia coli (strain K12), this protein is Protein SgcE (sgcE).